The primary structure comprises 132 residues: uncharacterized protein (132 aa).

4 helical membrane passes run Trp-6 to Ser-26, Asn-34 to Phe-54, Thr-59 to Tyr-79, and Ile-106 to Ile-126.

Its subcellular location is the cell membrane. This is an uncharacterized protein from Bacillus subtilis (strain 168).